A 216-amino-acid chain; its full sequence is ATP-dependent dethiobiotin synthetase BioD (216 aa).

13 to 18 is a binding site for ATP; it reads EVGKTY. T17 provides a ligand contact to Mg(2+). The active site involves K38. Residue T42 participates in substrate binding. ATP is bound by residues D47 and 112–115; that span reads EGVG. 2 residues coordinate Mg(2+): D47 and E112.

It belongs to the dethiobiotin synthetase family. As to quaternary structure, homodimer. It depends on Mg(2+) as a cofactor.

The protein resides in the cytoplasm. The enzyme catalyses (7R,8S)-7,8-diammoniononanoate + CO2 + ATP = (4R,5S)-dethiobiotin + ADP + phosphate + 3 H(+). The protein operates within cofactor biosynthesis; biotin biosynthesis; biotin from 7,8-diaminononanoate: step 1/2. Its function is as follows. Catalyzes a mechanistically unusual reaction, the ATP-dependent insertion of CO2 between the N7 and N8 nitrogen atoms of 7,8-diaminopelargonic acid (DAPA, also called 7,8-diammoniononanoate) to form a ureido ring. In Endomicrobium trichonymphae, this protein is ATP-dependent dethiobiotin synthetase BioD.